Reading from the N-terminus, the 233-residue chain is LexA repressor (233 aa).

A DNA-binding region (H-T-H motif) is located at residues 26–46 (FEEMKEALDLKSKSGVHRLIS). Residues serine 153 and lysine 191 each act as for autocatalytic cleavage activity in the active site.

This sequence belongs to the peptidase S24 family. In terms of assembly, homodimer.

The enzyme catalyses Hydrolysis of Ala-|-Gly bond in repressor LexA.. Functionally, represses a number of genes involved in the response to DNA damage (SOS response), including recA and lexA. In the presence of single-stranded DNA, RecA interacts with LexA causing an autocatalytic cleavage which disrupts the DNA-binding part of LexA, leading to derepression of the SOS regulon and eventually DNA repair. The sequence is that of LexA repressor from Erythrobacter litoralis (strain HTCC2594).